The sequence spans 502 residues: Ubiquilin (502 aa).

The Ubiquitin-like domain occupies 8–83 (IKVHVKSPSN…VHLVIRNQAR (76 aa)). Residues 84 to 115 (PTPAPAAATPTASSAPSSNPTPSSQPNPTNNP) show a composition bias toward low complexity. Residues 84-136 (PTPAPAAATPTASSAPSSNPTPSSQPNPTNNPFAAMGGMGSPADILNNPDAMR) form a disordered region. STI1 domains lie at 124-157 (SPAD…MRTI) and 161-200 (NPQF…FQEM). Polar residues predominate over residues 235–251 (SATNSLSGNPFASLRGD). Positions 235-294 (SATNSLSGNPFASLRGDQSSEPRVDRAGQENNEALPNPWASNANQATNNQSNNRSADFNS) are disordered. Basic and acidic residues predominate over residues 252–262 (QSSEPRVDRAG). Over residues 274-290 (ASNANQATNNQSNNRSA) the composition is skewed to low complexity. STI1 domains lie at 289-327 (SADF…INSI) and 351-387 (NPQI…SEAF). In terms of domain architecture, UBA spans 455–501 (PVNPEQTYASQLEQLQSMGFSDRARNVAALTATFGDLNAAVERLLNS).

In terms of tissue distribution, expressed in the pharynx, hypodermis, intestine and head neurons. Upon ER stress, expressed predominantly in pharyngeal muscle, hypodermis and intestine.

Functionally, may play a role in the ER-associated protein degradation pathway (ERAD) possibly via its interaction with ER-localized proteins ubxn-4 and cdc-48.1 and/or cdc48.2, providing a link between the polyubiquitinated ERAD substrates and the proteasome. Also plays an important role in the regulation of other protein degradation mechanisms and pathways including ubiquitin-proteasome system (UPS) and autophagy. Mediates the proteasomal targeting of misfolded or accumulated proteins for degradation by binding (via UBA domain) to their polyubiquitin chains and by interacting (via ubiquitin-like domain) with the subunits of the proteasome. Collaborates with POST (F36D4.5) in the export of ubiquitinated proteins from the nucleus to the cytoplasm. Also acts as a regulator of DNA repair by inhibiting homologous recombination repair, thereby redirecting double-strand break repair toward non-homologous end joining (NHEJ). This is Ubiquilin from Caenorhabditis elegans.